The primary structure comprises 361 residues: Outer membrane protein P2 (361 aa).

Residues 1–20 form the signal peptide; that stretch reads MKKTLAALIVGAFAASAANA.

Belongs to the Gram-negative porin family. In terms of assembly, homotrimer.

Its subcellular location is the cell outer membrane. Its function is as follows. Forms pores that allow passive diffusion of small molecules across the outer membrane. This chain is Outer membrane protein P2 (ompP2), found in Haemophilus influenzae.